We begin with the raw amino-acid sequence, 63 residues long: Large ribosomal subunit protein bL35 (63 aa).

The protein belongs to the bacterial ribosomal protein bL35 family.

The polypeptide is Large ribosomal subunit protein bL35 (Sulfurovum sp. (strain NBC37-1)).